The following is a 284-amino-acid chain: Formamidopyrimidine-DNA glycosylase (284 aa).

The Schiff-base intermediate with DNA role is filled by P2. The Proton donor role is filled by E3. Catalysis depends on K61, which acts as the Proton donor; for beta-elimination activity. 3 residues coordinate DNA: H95, R115, and R157. The FPG-type zinc-finger motif lies at 243-277; sequence AVYGRAGQPCRRCGTAIVREPFMNRSSFRCPACQP. R267 acts as the Proton donor; for delta-elimination activity in catalysis.

Belongs to the FPG family. Monomer. Requires Zn(2+) as cofactor.

It carries out the reaction Hydrolysis of DNA containing ring-opened 7-methylguanine residues, releasing 2,6-diamino-4-hydroxy-5-(N-methyl)formamidopyrimidine.. The catalysed reaction is 2'-deoxyribonucleotide-(2'-deoxyribose 5'-phosphate)-2'-deoxyribonucleotide-DNA = a 3'-end 2'-deoxyribonucleotide-(2,3-dehydro-2,3-deoxyribose 5'-phosphate)-DNA + a 5'-end 5'-phospho-2'-deoxyribonucleoside-DNA + H(+). Its function is as follows. Involved in base excision repair of DNA damaged by oxidation or by mutagenic agents. Acts as a DNA glycosylase that recognizes and removes damaged bases. Has a preference for oxidized purines, such as 7,8-dihydro-8-oxoguanine (8-oxoG). Has AP (apurinic/apyrimidinic) lyase activity and introduces nicks in the DNA strand. Cleaves the DNA backbone by beta-delta elimination to generate a single-strand break at the site of the removed base with both 3'- and 5'-phosphates. The chain is Formamidopyrimidine-DNA glycosylase from Acidothermus cellulolyticus (strain ATCC 43068 / DSM 8971 / 11B).